The chain runs to 268 residues: Aliphatic sulfonates import ATP-binding protein SsuB 2 (268 aa).

The ABC transporter domain maps to 16-230 (VQLRNVVRQF…DSGQAGFQSI (215 aa)). 48–55 (GASGSGKT) contributes to the ATP binding site.

The protein belongs to the ABC transporter superfamily. Aliphatic sulfonates importer (TC 3.A.1.17.2) family. In terms of assembly, the complex is composed of two ATP-binding proteins (SsuB), two transmembrane proteins (SsuC) and a solute-binding protein (SsuA).

The protein resides in the cell inner membrane. The enzyme catalyses ATP + H2O + aliphatic sulfonate-[sulfonate-binding protein]Side 1 = ADP + phosphate + aliphatic sulfonateSide 2 + [sulfonate-binding protein]Side 1.. Functionally, part of the ABC transporter complex SsuABC involved in aliphatic sulfonates import. Responsible for energy coupling to the transport system. This is Aliphatic sulfonates import ATP-binding protein SsuB 2 from Pseudomonas savastanoi pv. phaseolicola (strain 1448A / Race 6) (Pseudomonas syringae pv. phaseolicola (strain 1448A / Race 6)).